We begin with the raw amino-acid sequence, 398 residues long: 1-deoxy-D-xylulose 5-phosphate reductoisomerase (398 aa).

NADPH-binding residues include threonine 11, glycine 12, serine 13, isoleucine 14, arginine 38, asparagine 39, and asparagine 125. Lysine 126 contributes to the 1-deoxy-D-xylulose 5-phosphate binding site. Glutamate 127 provides a ligand contact to NADPH. Aspartate 151 is a Mn(2+) binding site. Serine 152, glutamate 153, serine 179, and histidine 202 together coordinate 1-deoxy-D-xylulose 5-phosphate. Glutamate 153 is a Mn(2+) binding site. NADPH is bound at residue glycine 208. Residues serine 215, asparagine 220, lysine 221, and glutamate 224 each coordinate 1-deoxy-D-xylulose 5-phosphate. Glutamate 224 contacts Mn(2+).

Belongs to the DXR family. Mg(2+) serves as cofactor. Requires Mn(2+) as cofactor.

The catalysed reaction is 2-C-methyl-D-erythritol 4-phosphate + NADP(+) = 1-deoxy-D-xylulose 5-phosphate + NADPH + H(+). It participates in isoprenoid biosynthesis; isopentenyl diphosphate biosynthesis via DXP pathway; isopentenyl diphosphate from 1-deoxy-D-xylulose 5-phosphate: step 1/6. Its function is as follows. Catalyzes the NADPH-dependent rearrangement and reduction of 1-deoxy-D-xylulose-5-phosphate (DXP) to 2-C-methyl-D-erythritol 4-phosphate (MEP). The sequence is that of 1-deoxy-D-xylulose 5-phosphate reductoisomerase from Burkholderia lata (strain ATCC 17760 / DSM 23089 / LMG 22485 / NCIMB 9086 / R18194 / 383).